The chain runs to 88 residues: Small ribosomal subunit protein bS20 (88 aa).

The segment at 1 to 27 is disordered; the sequence is MANSKSAKKRALQSEKRRQHNASRRSM.

The protein belongs to the bacterial ribosomal protein bS20 family.

In terms of biological role, binds directly to 16S ribosomal RNA. The polypeptide is Small ribosomal subunit protein bS20 (Shewanella woodyi (strain ATCC 51908 / MS32)).